A 184-amino-acid polypeptide reads, in one-letter code: GTP cyclohydrolase 1 (184 aa).

Zn(2+) is bound by residues C75, H78, and C146.

This sequence belongs to the GTP cyclohydrolase I family. As to quaternary structure, homomer.

It catalyses the reaction GTP + H2O = 7,8-dihydroneopterin 3'-triphosphate + formate + H(+). The protein operates within cofactor biosynthesis; 7,8-dihydroneopterin triphosphate biosynthesis; 7,8-dihydroneopterin triphosphate from GTP: step 1/1. This chain is GTP cyclohydrolase 1, found in Teredinibacter turnerae (strain ATCC 39867 / T7901).